The following is a 155-amino-acid chain: 3-hydroxyacyl-[acyl-carrier-protein] dehydratase FabZ (155 aa).

Residue H58 is part of the active site.

It belongs to the thioester dehydratase family. FabZ subfamily.

It is found in the cytoplasm. It catalyses the reaction a (3R)-hydroxyacyl-[ACP] = a (2E)-enoyl-[ACP] + H2O. Functionally, involved in unsaturated fatty acids biosynthesis. Catalyzes the dehydration of short chain beta-hydroxyacyl-ACPs and long chain saturated and unsaturated beta-hydroxyacyl-ACPs. This chain is 3-hydroxyacyl-[acyl-carrier-protein] dehydratase FabZ, found in Alkalilimnicola ehrlichii (strain ATCC BAA-1101 / DSM 17681 / MLHE-1).